The sequence spans 24 residues: Chlorate reductase subunit beta (24 aa).

In terms of assembly, heterotrimer of alpha, beta and gamma subunits. [3Fe-4S] cluster is required as a cofactor. It depends on [4Fe-4S] cluster as a cofactor.

The protein localises to the cytoplasm. Functionally, electron transfer subunit of the chlorate reductase. This chain is Chlorate reductase subunit beta, found in Stutzerimonas chloritidismutans (Pseudomonas chloritidismutans).